The following is a 131-amino-acid chain: Probable ATP synthase subunit g 2, mitochondrial (131 aa).

It belongs to the ATPase g subunit family. As to quaternary structure, subunit of the F-type ATPase which has 2 components, CF(1) - the catalytic core - and CF(0) - the membrane proton channel.

It localises to the mitochondrion membrane. Mitochondrial membrane ATP synthase (F(1)F(0) ATP synthase or Complex V) produces ATP from ADP in the presence of a proton gradient across the membrane which is generated by electron transport complexes of the respiratory chain. F-type ATPases consist of two structural domains, F(1) - containing the extramembraneous catalytic core, and F(0) - containing the membrane proton channel, linked together by a central stalk and a peripheral stalk. During catalysis, ATP synthesis in the catalytic domain of F(1) is coupled via a rotary mechanism of the central stalk subunits to proton translocation. Part of the complex F(0) domain. Minor subunit located with subunit a in the membrane. The polypeptide is Probable ATP synthase subunit g 2, mitochondrial (Caenorhabditis elegans).